The following is a 347-amino-acid chain: MTNSSRERKVRGSQIRTSRREKQDKNARNRTEKELTRLENHQTHRTKNGTSKLDERFIPEEQPFIETEAVTQVETRMRRWLDVGRPVHLIGPTGCGKTALAMHVARERDRPVVWINGDADLTTSDLVGEYAEKERISERDKYVHNVVKSKDIVRDRWVDNPLTLAVREGATLVYNEFSRTKPVANNVLLSVFEEGVLELPGQRGKSRYVDVHPDFRAILTSNSVEYAGVHEPQDALLDRLVGLYLDFYDRETEVEIVRAHVDDFDTEDTEQIVRLMRELRERLDVNVGTRAAIMAAEGLTTVDDLDRSILTDICVDVLASKVAQHSDVHELRDEVEATIKGMEGTLS.

A disordered region spans residues 1–50 (MTNSSRERKVRGSQIRTSRREKQDKNARNRTEKELTRLENHQTHRTKNGT). Basic and acidic residues predominate over residues 18 to 42 (SRREKQDKNARNRTEKELTRLENHQ). Residue 91-98 (GPTGCGKT) participates in ATP binding.

This sequence belongs to the CbbQ/NirQ/NorQ/GpvN family. As to quaternary structure, forms homodimers, a GvpN-GvpO heterodimer, interacts with GvpC and GvpL, might interact with GvpA.

The protein localises to the gas vesicle. It localises to the cytoplasm. The enzyme catalyses ATP + H2O = ADP + phosphate + H(+). Functionally, an ATPase that functions in gas vesicle formation. A minor component of the gas vesicle, also found in soluble extracts. Gas vesicles are hollow, gas filled proteinaceous nanostructures found in some microorganisms. They allow positioning of halobacteria at the optimal depth for growth in the poorly aerated, shallow brine pools of their habitat. Expression of a 9.5 kb mc-vac DNA fragment containing 2 divergently transcribed regions (gvpD-gvpE-gvpF-gvpG-gvpH-gvpI-gvpJ-gvpK-gvpL-gvpM and gvpA-gvpC-gvpN-gvpO) allows H.volcanii to produce gas vesicles. This Haloferax mediterranei (strain ATCC 33500 / DSM 1411 / JCM 8866 / NBRC 14739 / NCIMB 2177 / R-4) (Halobacterium mediterranei) protein is Gas vesicle ATPase GvpN.